The primary structure comprises 173 residues: Translation initiation factor IF-3 (173 aa).

The protein belongs to the IF-3 family. As to quaternary structure, monomer.

It localises to the cytoplasm. Functionally, IF-3 binds to the 30S ribosomal subunit and shifts the equilibrium between 70S ribosomes and their 50S and 30S subunits in favor of the free subunits, thus enhancing the availability of 30S subunits on which protein synthesis initiation begins. The polypeptide is Translation initiation factor IF-3 (Enterococcus faecalis (strain ATCC 700802 / V583)).